We begin with the raw amino-acid sequence, 509 residues long: Transcription factor SOX-9 (509 aa).

Disordered regions lie at residues 1-66 (MNLL…ESEE) and 160-271 (RLRV…IDFR). Over residues 27 to 41 (SEGSRGSPCPSGSGS) the composition is skewed to low complexity. Over residues 42-52 (DTENTRPQENT) the composition is skewed to polar residues. 2 stretches are compositionally biased toward basic and acidic residues: residues 56-66 (GEPDLKKESEE) and 160-174 (RLRV…DYKY). The tract at residues 63–103 (ESEEDKFPVCIREAVSQVLKGYDWTLVPMPVRVNGSSKNKP) is dimerization (DIM). Positions 63–103 (ESEEDKFPVCIREAVSQVLKGYDWTLVPMPVRVNGSSKNKP) are PQA. S64 carries the post-translational modification Phosphoserine. Positions 105–173 (VKRPMNAFMV…QHKKDHPDYK (69 aa)) form a DNA-binding region, HMG box. At S211 the chain carries Phosphoserine. Positions 224-307 (PGEHSGQSQG…LPPNGHPGVP (84 aa)) are transactivation domain (TAM). 2 consecutive short sequence motifs (9aaTAD) follow at residues 275–284 (IGELSSDVIS) and 290–298 (DVNEFDQYL). Disordered regions lie at residues 335-415 (WMSK…QHSP) and 420-439 (YSPF…TRSQ). Pro residues predominate over residues 341 to 359 (APPPPPHPPQQPPPVPQAP). Low complexity predominate over residues 360–369 (AQPQAALPQQ). Positions 380 to 415 (HTLTTLSSEPGQSQRTHIKTEQLSPSHYSEQQQHSP) are enriched in polar residues. Positions 394-509 (RTHIKTEQLS…QPVYTQLTRP (116 aa)) are transactivation domain (TAC). K398 is covalently cross-linked (Glycyl lysine isopeptide (Lys-Gly) (interchain with G-Cter in ubiquitin)). A 9aaTAD 3 motif is present at residues 460 to 468 (SVLYSTFTY). The segment at 479–509 (PIADTSGVPSIPQTHSPQHWEQPVYTQLTRP) is disordered. The span at 485–509 (GVPSIPQTHSPQHWEQPVYTQLTRP) shows a compositional bias: polar residues.

In terms of assembly, homodimer; homodimerization is required for activity. Interacts (via C-terminus) with ZNF219; forming a complex that binds to the COL2A1 promoter and activates COL2A1 expression. Interacts with DDRGK1. Interacts with EP300/p300. Interacts with beta-catenin (CTNNB1); inhibiting CTNNB1 activity by competing with the binding sites of TCF/LEF within CTNNB1. Acetylated; acetylation impairs nuclear localization and ability to transactivate expression of target genes. Deacetylated by SIRT1. Post-translationally, phosphorylation at Ser-64 and Ser-211 by PKA increases transcriptional activity and may help delay chondrocyte maturation downstream of PTHLH/PTHrP signaling. Phosphorylation at either Ser-64 or Ser-211 is required for sumoylation, but phosphorylation is not dependent on sumoylation. Phosphorylated on tyrosine residues; tyrosine dephosphorylation by PTPN11/SHP2 blocks SOX9 phosphorylation by PKA and subsequent SUMOylation. In terms of processing, sumoylated; phosphorylation at either Ser-64 or Ser-211 is required for sumoylation. Sumoylation is induced by BMP signaling pathway. Ubiquitinated; ubiquitination leads to proteasomal degradation and is negatively regulated by DDRGK1.

The protein localises to the nucleus. In terms of biological role, transcription factor that plays a key role in chondrocytes differentiation and skeletal development. Specifically binds the 5'-ACAAAG-3' DNA motif present in enhancers and super-enhancers and promotes expression of genes important for chondrogenesis, including cartilage matrix protein-coding genes COL2A1, COL4A2, COL9A1, COL11A2 and ACAN, SOX5 and SOX6. Also binds to some promoter regions. Plays a central role in successive steps of chondrocyte differentiation. Absolutely required for precartilaginous condensation, the first step in chondrogenesis during which skeletal progenitors differentiate into prechondrocytes. Together with SOX5 and SOX6, required for overt chondrogenesis when condensed prechondrocytes differentiate into early stage chondrocytes, the second step in chondrogenesis. Later, required to direct hypertrophic maturation and block osteoblast differentiation of growth plate chondrocytes: maintains chondrocyte columnar proliferation, delays prehypertrophy and then prevents osteoblastic differentiation of chondrocytes by lowering beta-catenin (CTNNB1) signaling and RUNX2 expression. Also required for chondrocyte hypertrophy, both indirectly, by keeping the lineage fate of chondrocytes, and directly, by remaining present in upper hypertrophic cells and transactivating COL10A1 along with MEF2C. Low lipid levels are the main nutritional determinant for chondrogenic commitment of skeletal progenitor cells: when lipids levels are low, FOXO (FOXO1 and FOXO3) transcription factors promote expression of SOX9, which induces chondrogenic commitment and suppresses fatty acid oxidation. Mechanistically, helps, but is not required, to remove epigenetic signatures of transcriptional repression and deposit active promoter and enhancer marks at chondrocyte-specific genes. Acts in cooperation with the Hedgehog pathway-dependent GLI (GLI1 and GLI3) transcription factors. In addition to cartilage development, also acts as a regulator of proliferation and differentiation in epithelial stem/progenitor cells: involved in the lung epithelium during branching morphogenesis, by balancing proliferation and differentiation and regulating the extracellular matrix. Controls epithelial branching during kidney development. This chain is Transcription factor SOX-9 (SOX9), found in Sus scrofa (Pig).